Here is a 478-residue protein sequence, read N- to C-terminus: Kynurenine 3-monooxygenase (478 aa).

FAD is bound by residues V19, 37 to 40, and A57; that span reads YEAR. R85 and Y99 together coordinate L-kynurenine. FAD contacts are provided by residues R111, L136, T172, D304, and 317–318; that span reads MN. L-kynurenine is bound by residues N363 and Y398. Transmembrane regions (helical) follow at residues 385–404 and 425–445; these read FLHA…VAFT and GLFV…VHHL.

Belongs to the aromatic-ring hydroxylase family. KMO subfamily. FAD serves as cofactor. Highest activity in liver and kidney. Low activity in spleen, stomach, intestinal tract, esophagus, heart and lung.

The protein resides in the mitochondrion outer membrane. It carries out the reaction L-kynurenine + NADPH + O2 + H(+) = 3-hydroxy-L-kynurenine + NADP(+) + H2O. It functions in the pathway cofactor biosynthesis; NAD(+) biosynthesis; quinolinate from L-kynurenine: step 1/3. Functionally, catalyzes the hydroxylation of L-kynurenine (L-Kyn) to form 3-hydroxy-L-kynurenine (L-3OHKyn). Required for synthesis of quinolinic acid, a neurotoxic NMDA receptor antagonist and potential endogenous inhibitor of NMDA receptor signaling in axonal targeting, synaptogenesis and apoptosis during brain development. Quinolinic acid may also affect NMDA receptor signaling in pancreatic beta cells, osteoblasts, myocardial cells, and the gastrointestinal tract. The chain is Kynurenine 3-monooxygenase from Rattus norvegicus (Rat).